The following is a 497-amino-acid chain: Amino acid oxidase fsqB (497 aa).

FAD-binding residues include valine 14, phenylalanine 15, aspartate 38, asparagine 53, alanine 57, asparagine 58, arginine 63, valine 64, and valine 211. Residue cysteine 414 is modified to S-8alpha-FAD cysteine. FAD is bound by residues phenylalanine 447 and lysine 448.

It belongs to the MSOX/MTOX family. In terms of assembly, dimer. The cofactor is FAD.

It catalyses the reaction (2S,4S,5S)-2-amino-6-(3,4-dihydroxyphenyl)-4-hydroxy-5-(methylamino)hexanoyl-[peptidyl-carrier protein] + O2 = (2S,4S)-2-amino-4-[(3S)-7,8-dihydroxy-1,2,3,4-tetrahydroisoquinolin-3-yl]-4-hydroxybutanoyl-[peptidyl-carrier protein] + H2O2. It carries out the reaction N-methyl-L-dopa + O2 = (3S)-7,8-dihydroxy-1,2,3,4-tetrahydroisoquinoline-3-carboxylate + H2O2. The enzyme catalyses N-methyl-D-dopa + O2 = (3R)-7,8-dihydroxy-1,2,3,4-tetrahydroisoquinoline-3-carboxylate + H2O2. It functions in the pathway secondary metabolite biosynthesis. In terms of biological role, amino acid oxidase; part of the gene cluster that mediates the biosynthesis of the isoquinoline alkaloids fumisoquin A, fumisoquin B and fumisoquin C; as well as small amounts of fumipyrrole as a shunt metabolite. The products of the cluster lead to a brown coloration and are important for growth and conidiation. The nonribosomal peptide synthetase-like protein fsqF, which lacks a canonical condensation domain, is required for addition of a serine-derived dehydroalanine moiety to activated tyrosine but is not essential for the subsequent steps leading to isoquinoline formation. A different enzyme, most likely the ATP-grasp enzyme fsqD, is responsible for activation of tyrosine. Three additional enzymes encoded by the fsq cluster, the N-methyltransferase fsqC, the phenol 2-monooxygenase fsqG and the FAD-dependent oxidase fsqB, catalyze the formation of the isoquinoline ring system in the fumisoquins. FsqB converts the fspF thiolation domain-bound (2S,4S,5S)-2-amino-6-(3,4-dihydroxyphenyl)-4-hydroxy-5-(methylamino)hexanoyl into isoquinoline. The cyclization most likely proceeds via a two-step mechanism, beginning with FAD-dependent oxidation of the methyl group to an iminium species followed by electrophilic attack on the deprotonated phenol. Is able to convert N-methyl-3,4-dihydroxy-DL-phenylalanine (N-methyl-DOPA) directly into cyclic isoquinoline, in vitro. The absence of the meta-hydroxyl group, as in L-N-methyl-tyrosine, leads to a 25-fold lower rate of reduction and the formation of the demethylated product L-tyrosine, instead of a cyclic product. Does not accept the D-stereoisomer of N-methyltyrosine, in contrast to N-methyl-DOPA, for which both stereoisomers are oxidized with similar rates. The sequence is that of Amino acid oxidase fsqB from Aspergillus fumigatus (strain ATCC MYA-4609 / CBS 101355 / FGSC A1100 / Af293) (Neosartorya fumigata).